A 513-amino-acid chain; its full sequence is uncharacterized protein (513 aa).

2 disordered regions span residues 72–113 and 155–262; these read GVVP…TGQF and IMGG…NPRF. Low complexity predominate over residues 82 to 106; that stretch reads ANRTANPNTNSNPNPNATNAQPNPT. 2 stretches are compositionally biased toward polar residues: residues 164–189 and 210–228; these read EANS…QTQG and TPLN…EFQQ. A compositionally biased stretch (low complexity) spans 229–238; that stretch reads TTSPIFSSSS. Positions 239 to 248 are enriched in pro residues; that stretch reads TPPPPPPRPS. Residues 253–262 show a composition bias toward polar residues; the sequence is GESQNTNPRF. An RING-type; atypical zinc finger spans residues 396-437; it reads CTICMEMFKINDDVIQLPCKHYFHENCIKPWLRVNGTCAICR. Residues 439-513 form a disordered region; that stretch reads PVDPNSQQRN…DDFVDEEPLE (75 aa). The segment covering 442–493 has biased composition (polar residues); that stretch reads PNSQQRNNTSTDSANGHNPSNHANPSTSTTNDQGATLRNESFNAASQSNLSS.

This is an uncharacterized protein from Schizosaccharomyces pombe (strain 972 / ATCC 24843) (Fission yeast).